The following is a 280-amino-acid chain: MHSDASNFQLNSHLSTLASIHKIYHTLHRLNLTEDVGPESHGTACCSRAMPPRKKRRPTAGDDLSAKKSRQDNVYRKQEALQIQEAEAFSSKRCLEWFYEYAGCDDVVGPEGMEKFCEDIGVEPENVVMLVLAWKLDAQSMGYFTLQEWLKGMGSLQCDSTEKLRNSLDYLRSVLNDATSFKLIYRYAFDFAREKDQRSLDLNTAKCMLGLLLGKTWPLFPVFNQFLEQSKYKVINKDQWCNVLEFSRTINLDLSNYDEDGAWPVLLDEFVEWYKDREMS.

The disordered stretch occupies residues 37–71; sequence GPESHGTACCSRAMPPRKKRRPTAGDDLSAKKSRQ. Positions 89-275 constitute a DCUN1 domain; it reads FSSKRCLEWF…LLDEFVEWYK (187 aa).

In terms of assembly, may interact (via the DCUN1 domain) with unneddylated cullins.

Its subcellular location is the nucleus. Its function is as follows. Contributes to the neddylation of all cullins by transferring NEDD8 from N-terminally acetylated NEDD8-conjugating E2s enzyme to different cullin C-terminal domain-RBX complexes. In Danio rerio (Zebrafish), this protein is DCN1-like protein 4.